Consider the following 233-residue polypeptide: Ribonuclease 3 (233 aa).

An RNase III domain is found at 4 to 126 (LNKLMERLGH…IVGSIYIDAG (123 aa)). Glu-39 is a Mg(2+) binding site. Asp-43 is a catalytic residue. The Mg(2+) site is built by Asp-112 and Glu-115. The active site involves Glu-115. A DRBM domain is found at 153–222 (DAKSLLQEWL…AKRFLELLDD (70 aa)).

It belongs to the ribonuclease III family. In terms of assembly, homodimer. It depends on Mg(2+) as a cofactor.

The protein resides in the cytoplasm. It carries out the reaction Endonucleolytic cleavage to 5'-phosphomonoester.. Digests double-stranded RNA. Involved in the processing of primary rRNA transcript to yield the immediate precursors to the large and small rRNAs (23S and 16S). Processes some mRNAs, and tRNAs when they are encoded in the rRNA operon. Processes pre-crRNA and tracrRNA of type II CRISPR loci if present in the organism. The sequence is that of Ribonuclease 3 from Coxiella burnetii (strain CbuG_Q212) (Coxiella burnetii (strain Q212)).